The sequence spans 88 residues: C-C motif chemokine 18 (88 aa).

A signal peptide spans 1 to 19; it reads MKGLAAALLVLCTVALCSC. Disulfide bonds link Cys29-Cys53 and Cys30-Cys69.

This sequence belongs to the intercrine beta (chemokine CC) family. The Cys-29/Cys-53 disulfide bond is required for activity.

The protein localises to the secreted. Its function is as follows. Chemotactic factor that attracts lymphocytes but not monocytes or granulocytes. May be involved in B-cell migration into B-cell follicles in lymph nodes. Attracts naive T-lymphocytes toward dendritic cells and activated macrophages in lymph nodes, has chemotactic activity for naive T-cells, CD4+ and CD8+ T-cells and thus may play a role in both humoral and cell-mediated immunity responses. The chain is C-C motif chemokine 18 (CCL18) from Macaca mulatta (Rhesus macaque).